A 325-amino-acid chain; its full sequence is Sel1-repeat-containing protein YbeQ (325 aa).

Sel1-like repeat units follow at residues 26–61 (EAQY…EQGH), 63–97 (EAQY…LQGH), 103–130 (ALGW…AESG), 132–167 (SYAQ…LQGH), 168–203 (SDAQ…QQGN), 205–239 (HAQF…AQGS), 242–275 (AYVN…ECND), and 280–305 (YNLA…LYRK).

To E.coli YbeT.

The protein is Sel1-repeat-containing protein YbeQ (ybeQ) of Escherichia coli (strain K12).